The chain runs to 276 residues: Ubiquinone biosynthesis protein coq11, mitochondrial (276 aa).

This sequence belongs to the NAD(P)-dependent epimerase/dehydratase family.

Its subcellular location is the mitochondrion. Its function is as follows. Acts in the coenzyme Q biosynthetic pathway. The chain is Ubiquinone biosynthesis protein coq11, mitochondrial from Schizosaccharomyces pombe (strain 972 / ATCC 24843) (Fission yeast).